Here is a 223-residue protein sequence, read N- to C-terminus: Phosphoribosylformylglycinamidine synthase subunit PurQ (223 aa).

Residues phenylalanine 3 to valine 223 form the Glutamine amidotransferase type-1 domain. Residue cysteine 85 is the Nucleophile of the active site. Residues histidine 193 and glutamate 195 contribute to the active site.

In terms of assembly, part of the FGAM synthase complex composed of 1 PurL, 1 PurQ and 2 PurS subunits.

The protein resides in the cytoplasm. The catalysed reaction is N(2)-formyl-N(1)-(5-phospho-beta-D-ribosyl)glycinamide + L-glutamine + ATP + H2O = 2-formamido-N(1)-(5-O-phospho-beta-D-ribosyl)acetamidine + L-glutamate + ADP + phosphate + H(+). The enzyme catalyses L-glutamine + H2O = L-glutamate + NH4(+). It participates in purine metabolism; IMP biosynthesis via de novo pathway; 5-amino-1-(5-phospho-D-ribosyl)imidazole from N(2)-formyl-N(1)-(5-phospho-D-ribosyl)glycinamide: step 1/2. Part of the phosphoribosylformylglycinamidine synthase complex involved in the purines biosynthetic pathway. Catalyzes the ATP-dependent conversion of formylglycinamide ribonucleotide (FGAR) and glutamine to yield formylglycinamidine ribonucleotide (FGAM) and glutamate. The FGAM synthase complex is composed of three subunits. PurQ produces an ammonia molecule by converting glutamine to glutamate. PurL transfers the ammonia molecule to FGAR to form FGAM in an ATP-dependent manner. PurS interacts with PurQ and PurL and is thought to assist in the transfer of the ammonia molecule from PurQ to PurL. This chain is Phosphoribosylformylglycinamidine synthase subunit PurQ, found in Staphylococcus epidermidis (strain ATCC 35984 / DSM 28319 / BCRC 17069 / CCUG 31568 / BM 3577 / RP62A).